Reading from the N-terminus, the 128-residue chain is Large ribosomal subunit protein eL22 (128 aa).

Belongs to the eukaryotic ribosomal protein eL22 family. As to quaternary structure, component of the large ribosomal subunit.

It localises to the cytoplasm. Component of the large ribosomal subunit. The ribosome is a large ribonucleoprotein complex responsible for the synthesis of proteins in the cell. This chain is Large ribosomal subunit protein eL22 (RPL22), found in Gallus gallus (Chicken).